We begin with the raw amino-acid sequence, 410 residues long: Ribonucleoside-diphosphate reductase small chain (410 aa).

Polar residues predominate over residues 1–20 (MSVQTSPSKQVTSGIQNLNM). 2 disordered regions span residues 1–43 (MSVQ…DEDL) and 55–78 (NANKKAAEAKKMAPTLKPEEANEP). Composition is skewed to basic and acidic residues over residues 23 to 43 (PAKKLDFGATDKENKPFDEDL) and 55 to 65 (NANKKAAEAKK). 3 residues coordinate Fe cation: Asp146, Glu177, and His180. Residue Tyr184 is part of the active site. Residues Glu240, Glu274, and His277 each coordinate Fe cation.

It belongs to the ribonucleoside diphosphate reductase small chain family. In terms of assembly, heterodimer of a large and a small subunit. The cofactor is Fe cation.

The enzyme catalyses a 2'-deoxyribonucleoside 5'-diphosphate + [thioredoxin]-disulfide + H2O = a ribonucleoside 5'-diphosphate + [thioredoxin]-dithiol. Functionally, provides the precursors necessary for DNA synthesis. Catalyzes the biosynthesis of deoxyribonucleotides from the corresponding ribonucleotides. This chain is Ribonucleoside-diphosphate reductase small chain (rnr-2), found in Neurospora crassa (strain ATCC 24698 / 74-OR23-1A / CBS 708.71 / DSM 1257 / FGSC 987).